An 86-amino-acid polypeptide reads, in one-letter code: Candiduxin-2 (86 aa).

An N-terminal signal peptide occupies residues 1-21; the sequence is MKTLLLTLVVLTIACLDLGYT. Cystine bridges form between cysteine 24/cysteine 45, cysteine 38/cysteine 62, cysteine 66/cysteine 78, and cysteine 79/cysteine 84.

Belongs to the three-finger toxin family. Short-chain subfamily. Orphan group IX sub-subfamily. In terms of tissue distribution, expressed by the venom gland.

The protein resides in the secreted. The polypeptide is Candiduxin-2 (Bungarus candidus (Malayan krait)).